We begin with the raw amino-acid sequence, 148 residues long: Arginine repressor (148 aa).

It belongs to the ArgR family.

The protein resides in the cytoplasm. Its pathway is amino-acid biosynthesis; L-arginine biosynthesis [regulation]. Regulates arginine biosynthesis genes. The sequence is that of Arginine repressor from Koribacter versatilis (strain Ellin345).